Reading from the N-terminus, the 364-residue chain is Ribosomal RNA large subunit methyltransferase M (364 aa).

Residues Ser198, 231–234 (APGG), Asp250, Asp270, and Asp286 contribute to the S-adenosyl-L-methionine site. Lys315 (proton acceptor) is an active-site residue.

Belongs to the class I-like SAM-binding methyltransferase superfamily. RNA methyltransferase RlmE family. RlmM subfamily. Monomer.

Its subcellular location is the cytoplasm. The catalysed reaction is cytidine(2498) in 23S rRNA + S-adenosyl-L-methionine = 2'-O-methylcytidine(2498) in 23S rRNA + S-adenosyl-L-homocysteine + H(+). Catalyzes the 2'-O-methylation at nucleotide C2498 in 23S rRNA. The protein is Ribosomal RNA large subunit methyltransferase M of Azoarcus sp. (strain BH72).